We begin with the raw amino-acid sequence, 1679 residues long: MAENELRLLNNAELKLALAESEDSFQSLVSVFLCPILLKLDSPHESVRNKTISIANHIMTRLNNNAQAILPLEALVSQYVEANQPLRKRFLLAFISIGEKRIPCSENLALLQICLNHVNEYPLVLLTLTIRLLRFSKPTSAITCSNDVILSLSSFYLIQKDQRIFSDLQFSQKTVDYRLSLLRWIHLSSWPSNWKWLAYFFASADSHSEVARLADEFTRDSGLPDLENLSHVNVLLDIALDKFRIEALHANFSVSISLRNKAIQHLLKSKIAANTDKAINCIEFILEAPPSMQPRLIQFTRWVVDKADPNFLKPKAAMILEKILSILSSNIIQSDLLRGFLYTTIGLLTKVDNHLITNSLLTNLLTSLQSELPDVRVSIDEALSIIIPYYSNFRFSNELLPVLEPFIFDSPESPAAYCALRFVLVAFPFDYLPARFICLKVQNPFVFHHSFIEEAKKGLNLSQWVQYNSVYSTNEAQEEDKVRAASYPSASEVISFILSDHDLKKFWESNAAEYCLAILEFIERCIYYSADRSLELYDNDKLSSIDALLIQDSKLREMVSEKCISLSNFNVFLEYVFYGTLLMHFEPTYALSRLVSFAPPEVTFSLPELDFLTSVFNFPLALRNTATRILGIILSTKDSTRISEVLSSCFTIISTSNNKNDNFFKAETALLIIGYTISYLAAQTNSAAVDSFILNSGSIKEFFSVLLEYLGSNVLHKKTTSLAIYKELFVYFTRDWITSYGVDFDEILNVLLRFLKEVEDTNVKVECLHVISRMSLSFSDDEMAEKILKAIYVTYHMDSPDILFASAEAMSILAGGHRNVFVKSTCPIFFQKQLDNYKADHYCFTLDFILTDCVNSPKPLLRRASSLWLFYIVRYCEPQTYTMTRLNDIYHSFLSFLVTQDDFVQDTASRGLKAMYDVLEGDERKSFTDNLISTIAADRVDEKTKAPLDADTALFTTNKGTVATYKDICSLASESGNPDLIYSFLSIAGNSSLWQARKGLASGISYLGIPEDQKRKTFSFDTSKSSSLLKKLYRFKHDPNPDVAKTMGEIWDTLVPSDLNLASHRKYLVEDCLEFMGSRSWRDRESSVNTLVSLLSNVPVTEYLNQLEDIWNMSFRTLDDIKESVREASFPLCKLLARSVIQSLEKTSHNTSPSGICKGKRIVSVALPFLLKHAYDQAKEVRSLTYSTITELVRTGNSTLTSFVPAIMQVMLEYLTEYESKAATFLDFHAKNYSIKQENIDNARTSAVQSSSMMDTLEKCIGLLDESSMQTLYPILNRMIAKPGGVPTKIGSAQVVMLLVIRRGPLVKQFASKLLQSLKSSCFDRNAAVSDAFASAIGYLLRVCPLEIASQTCQEIIDKFYDGNTNEQIISSKLTVYASRYAPDVFLNLGSLFFPFIFFGKHSSSISINGVLSKAWDELSSAGSSVNLYSEEIILLIQKNLIVTKWDVKRPAAAALLEFVNTSRLTYRQNDIYVLLNETMKDKSWPGKELLLEAYVKFLIKYPEFIKSQKMEEVHQVIVREFKRRNIVYKSHAMESVGELLSDENYRELDLYELSLNECGTFLQKEWFDKDDELNLEEKIALQRNSVYAMFNSSRPGNKNCNEMLLTYLSNALDENYLHWNVKLAILKNAPHLKKIMSNEEFLLYKDILYRCYEDNPSPKAKDYAEVIFGENYLSVLRN.

HEAT repeat units lie at residues 27 to 64 (SLVS…RLNN), 66 to 103 (AQAI…KRIP), 105 to 142 (SENL…TSAI), 314 to 354 (PKAA…VDNH), 355 to 392 (LITN…YYSN), 394 to 431 (RFSN…PFDY), 513 to 551 (EYCL…LLIQ), 697 to 734 (GSIK…YFTR), 742 to 780 (VDFD…SFSD), 840 to 878 (DHYC…YCEP), 884 to 921 (TRLN…VLEG), 1023 to 1060 (SKSS…SDLN), 1089 to 1127 (NTLV…SVRE), 1160 to 1198 (KRIV…TGNS), 1202 to 1239 (SFVP…KQEN), 1267 to 1305 (SSMQ…RRGP), 1309 to 1346 (QFAS…VCPL), 1467 to 1504 (YRQN…KYPE), 1509 to 1546 (QKME…DENY), and 1600 to 1639 (NCNE…IMSN).

It belongs to the ECM29 family. In terms of assembly, component of the proteasome.

It is found in the cytoplasm. The protein localises to the nucleus. In terms of biological role, stabilizes the proteasome holoenzyme, probably by tethering the 20S proteolytic core particle and the 19S regulatory particle. The proteasome is a multicatalytic proteinase complex which is characterized by its ability to cleave peptides with Arg, Phe, Tyr, Leu, and Glu adjacent to the leaving group at neutral or slightly basic pH. The proteasome has an ATP-dependent proteolytic activity. This chain is Proteasome component ecm29 (ecm29), found in Schizosaccharomyces pombe (strain 972 / ATCC 24843) (Fission yeast).